Consider the following 247-residue polypeptide: Uridylate kinase (247 aa).

ATP is bound at residue 14 to 17; the sequence is KLSG. The interval 22-27 is involved in allosteric activation by GTP; it reads GERGVG. G56 is a UMP binding site. Residues G57 and R61 each contribute to the ATP site. UMP is bound by residues D76 and 137-144; that span reads IGSPYFST. Residues N165, Y171, and D174 each coordinate ATP.

Belongs to the UMP kinase family. Homohexamer.

It localises to the cytoplasm. The enzyme catalyses UMP + ATP = UDP + ADP. The protein operates within pyrimidine metabolism; CTP biosynthesis via de novo pathway; UDP from UMP (UMPK route): step 1/1. Its activity is regulated as follows. Allosterically activated by GTP. Inhibited by UTP, 5-bromo-UTP and 5-iodo-UTP. In terms of biological role, catalyzes the reversible phosphorylation of UMP to UDP, with ATP as the most efficient phosphate donor. In Streptococcus pneumoniae serotype 4 (strain ATCC BAA-334 / TIGR4), this protein is Uridylate kinase (pyrH).